A 282-amino-acid polypeptide reads, in one-letter code: Undecaprenyl-diphosphatase (282 aa).

The next 7 membrane-spanning stretches (helical) occupy residues 40–60 (GAAFTAIVQIGTLAAVLIYFM), 89–109 (WMIAAGTIPIVVFGLAFKDDI), 113–133 (LRSLYWVSAALIALALVLSIA), 150–170 (ISEITWLDAMIIGFAQAMALI), 196–216 (FSFLLSLPSVFAAGIYQLYKT), 230–250 (IAVATVFAFIFGYLSIAFLLT), and 258–278 (GIFIGYRLLLGISLIIMIGTG).

The protein belongs to the UppP family.

The protein resides in the cell inner membrane. It carries out the reaction di-trans,octa-cis-undecaprenyl diphosphate + H2O = di-trans,octa-cis-undecaprenyl phosphate + phosphate + H(+). Catalyzes the dephosphorylation of undecaprenyl diphosphate (UPP). Confers resistance to bacitracin. This Chlorobaculum parvum (strain DSM 263 / NCIMB 8327) (Chlorobium vibrioforme subsp. thiosulfatophilum) protein is Undecaprenyl-diphosphatase.